The following is a 552-amino-acid chain: Cation/acetate symporter ActP (552 aa).

The next 14 membrane-spanning stretches (helical) occupy residues 5–25, 35–55, 78–98, 105–125, 151–171, 185–205, 208–228, 264–284, 305–325, 357–377, 407–427, 431–451, 466–486, and 499–519; these read FMMLFGLLTLPVLAWAADALT, IQAIVMFLLFVGGTLYITYWA, GLAIAGDYMSAASFLGISALV, GLIYSLGFLVGWPIILFLIAE, LSACGSLVVVALYLIAQMVGA, VAVILVGILMVMYVMFGGMLA, WVQIIKAVLLLFGATFMAVMV, ISALSLGLGLMFGTAGLPHIL, GFMGYFYFLTFIIGFGAILLV, FFLGFISAVAFATILAVVAGL, VSKITVLVLGVVAISLGILFE, IAFMVGLAFSIAASCNFPIII, IGGWAGLLTAVILMILGPTIW, and YDYPALFSMLVAFIGIWFFSI.

It belongs to the sodium:solute symporter (SSF) (TC 2.A.21) family.

It localises to the cell inner membrane. Its function is as follows. Transports acetate. The chain is Cation/acetate symporter ActP from Pectobacterium carotovorum subsp. carotovorum (strain PC1).